The following is a 246-amino-acid chain: Proteasome subunit alpha type-6 (246 aa).

This sequence belongs to the peptidase T1A family. In terms of assembly, the 26S proteasome consists of a 20S proteasome core and two 19S regulatory subunits. The 20S proteasome core is composed of 28 subunits that are arranged in four stacked rings, resulting in a barrel-shaped structure. The two end rings are each formed by seven alpha subunits, and the two central rings are each formed by seven beta subunits. The catalytic chamber with the active sites is on the inside of the barrel.

It localises to the cytoplasm. It is found in the nucleus. Functionally, the proteasome is a multicatalytic proteinase complex which is characterized by its ability to cleave peptides with Arg, Phe, Tyr, Leu, and Glu adjacent to the leaving group at neutral or slightly basic pH. The proteasome has an ATP-dependent proteolytic activity. The protein is Proteasome subunit alpha type-6 (pas-1) of Caenorhabditis elegans.